A 198-amino-acid chain; its full sequence is Carnitine operon protein CaiE (198 aa).

Residues 179-198 (VEENRPRLKGTTDVKPKSAQ) form a disordered region. Residues 180–198 (EENRPRLKGTTDVKPKSAQ) show a composition bias toward basic and acidic residues.

The protein belongs to the transferase hexapeptide repeat family.

Its pathway is amine and polyamine metabolism; carnitine metabolism. Functionally, overproduction of CaiE stimulates the activity of CaiB and CaiD. The protein is Carnitine operon protein CaiE of Salmonella typhi.